The chain runs to 439 residues: Putative porin QuiX (439 aa).

Residues 1-22 (MRHFFKLGLVSAAVLGSQMTLA) form the signal peptide.

Belongs to the OprB family.

Its subcellular location is the cell outer membrane. Its function is as follows. Could be involved in the transport of quinate or shikimate. In Acinetobacter baylyi (strain ATCC 33305 / BD413 / ADP1), this protein is Putative porin QuiX (quiX).